Here is a 184-residue protein sequence, read N- to C-terminus: Ras-related protein Rap-1A (184 aa).

GTP contacts are provided by residues 10-18 (GSGGVGKSA), 29-35 (VEKYDPT), Gly-60, and 116-119 (NKCD). The Effector region signature appears at 32-40 (YDPTIEDSY). Cys-181 is modified (cysteine methyl ester). Residue Cys-181 is the site of S-geranylgeranyl cysteine attachment. Residues 182 to 184 (LLL) constitute a propeptide, removed in mature form.

It belongs to the small GTPase superfamily. Ras family. Found in a complex, at least composed of ITGB1BP1, KRIT1 and RAP1A. Interacts (active GTP-bound form preferentially) with KRIT1 (via C-terminus FERM domain); the interaction does not induce the opening conformation of KRIT1. Found in a complex composed of CDH1, RAP1A and PKP3; PKP3 acts as a scaffold protein within the complex, the complex is required for CDH1 localization to mature desmosome cell junctions. In its GTP-bound form interacts with PLCE1 and RADIL. Interacts with SGSM1, SGSM2 and SGSM3. Interacts (via GTP-bound active form) with RAPGEF2 (via Ras-associating domain). Interacts with TBC1D21. Interacts with RAP1GDS1.

It is found in the cell membrane. It localises to the cytoplasm. Its subcellular location is the perinuclear region. The protein resides in the cell junction. The protein localises to the early endosome. The catalysed reaction is GTP + H2O = GDP + phosphate + H(+). Its activity is regulated as follows. Activated by guanine nucleotide-exchange factors (GEF) EPAC and EPAC2 in a cAMP-dependent manner, and GFR. Functionally, counteracts the mitogenic function of Ras, at least partly because it can interact with Ras GAPs and RAF in a competitive manner. Together with ITGB1BP1, regulates KRIT1 localization to microtubules and membranes. Plays a role in nerve growth factor (NGF)-induced neurite outgrowth. Plays a role in the regulation of embryonic blood vessel formation. Involved in the establishment of basal endothelial barrier function. Facilitates the progressive accumulation of CDH1 at mature desmosome junctions via cAMP-dependent signaling and its interaction with PKP3. May be involved in the regulation of the vascular endothelial growth factor receptor KDR expression at endothelial cell-cell junctions. The polypeptide is Ras-related protein Rap-1A (RAP1A) (Bos taurus (Bovine)).